Reading from the N-terminus, the 344-residue chain is KRR1 small subunit processome component homolog (344 aa).

The 69-residue stretch at D126–N194 folds into the KH domain. Over residues K230–K246 the composition is skewed to basic residues. Positions K230–D326 are disordered. Residues F271–S344 are a coiled coil. The span at L272 to D303 shows a compositional bias: basic and acidic residues.

This sequence belongs to the KRR1 family. Monomer. Component of the ribosomal small subunit (SSU) processome.

It is found in the nucleus. The protein localises to the nucleolus. Functionally, required for 40S ribosome biogenesis. Involved in nucleolar processing of pre-18S ribosomal RNA and ribosome assembly. Binds to RNA. Required for female germline development, cell viability during eye development and for survival of dividing cells and epithelial cells during early wing disk development. The polypeptide is KRR1 small subunit processome component homolog (Drosophila mojavensis (Fruit fly)).